The sequence spans 643 residues: 1-deoxy-D-xylulose-5-phosphate synthase (643 aa).

Thiamine diphosphate contacts are provided by residues His79 and 120–122 (AHA). Asp151 contacts Mg(2+). Thiamine diphosphate contacts are provided by residues 152–153 (GS), Asn180, Tyr287, and Glu369. Asn180 is a binding site for Mg(2+).

It belongs to the transketolase family. DXPS subfamily. In terms of assembly, homodimer. It depends on Mg(2+) as a cofactor. Thiamine diphosphate is required as a cofactor.

The enzyme catalyses D-glyceraldehyde 3-phosphate + pyruvate + H(+) = 1-deoxy-D-xylulose 5-phosphate + CO2. Its pathway is metabolic intermediate biosynthesis; 1-deoxy-D-xylulose 5-phosphate biosynthesis; 1-deoxy-D-xylulose 5-phosphate from D-glyceraldehyde 3-phosphate and pyruvate: step 1/1. In terms of biological role, catalyzes the acyloin condensation reaction between C atoms 2 and 3 of pyruvate and glyceraldehyde 3-phosphate to yield 1-deoxy-D-xylulose-5-phosphate (DXP). The chain is 1-deoxy-D-xylulose-5-phosphate synthase from Maricaulis maris (strain MCS10) (Caulobacter maris).